Consider the following 106-residue polypeptide: UPF0145 protein PputGB1_2909 (106 aa).

This sequence belongs to the UPF0145 family.

This is UPF0145 protein PputGB1_2909 from Pseudomonas putida (strain GB-1).